The following is a 128-amino-acid chain: Azurin (128 aa).

Positions A1–K128 constitute a Plastocyanin-like domain. C3 and C26 are joined by a disulfide. H46, C112, H117, and M121 together coordinate Cu cation.

The protein localises to the periplasm. Functionally, transfers electrons from cytochrome c551 to cytochrome oxidase. The chain is Azurin from Pseudomonas fluorescens biotype C.